Consider the following 263-residue polypeptide: Small ribosomal subunit protein uS2m (263 aa).

A mitochondrion-targeting transit peptide spans 1–15 (MLSRKLSPEQLVARR).

This sequence belongs to the universal ribosomal protein uS2 family. As to quaternary structure, component of the mitochondrial small ribosomal subunit (mt-SSU). Mature yeast 74S mitochondrial ribosomes consist of a small (37S) and a large (54S) subunit. The 37S small subunit contains a 15S ribosomal RNA (15S mt-rRNA) and at least 32 different proteins. The 54S large subunit contains a 21S rRNA (21S mt-rRNA) and at least 45 different proteins.

The protein resides in the mitochondrion. Component of the mitochondrial ribosome (mitoribosome), a dedicated translation machinery responsible for the synthesis of mitochondrial genome-encoded proteins, including at least some of the essential transmembrane subunits of the mitochondrial respiratory chain. The mitoribosomes are attached to the mitochondrial inner membrane and translation products are cotranslationally integrated into the membrane. In Schizosaccharomyces pombe (strain 972 / ATCC 24843) (Fission yeast), this protein is Small ribosomal subunit protein uS2m.